The following is a 174-amino-acid chain: MSIKSRIRTIPHYPREGIMFRDITTLLKDPVGLRITIDEIAERYRAEKIDKVVGIESRGFIFAAPVAYALGAGFVPIRKQGKLPAETISCDYQLEYGYDKIEIHADAIDKDDRVLMIDDLIATGGTMEAAIKLVQEMGGKIIECCFVIDLPGVGGSTRLRQQDHPLYSLCSFDD.

Belongs to the purine/pyrimidine phosphoribosyltransferase family. Homodimer.

It localises to the cytoplasm. It catalyses the reaction AMP + diphosphate = 5-phospho-alpha-D-ribose 1-diphosphate + adenine. It functions in the pathway purine metabolism; AMP biosynthesis via salvage pathway; AMP from adenine: step 1/1. In terms of biological role, catalyzes a salvage reaction resulting in the formation of AMP, that is energically less costly than de novo synthesis. The protein is Adenine phosphoribosyltransferase of Nitrosomonas eutropha (strain DSM 101675 / C91 / Nm57).